The following is a 224-amino-acid chain: Response regulator protein GraR (224 aa).

The Response regulatory domain occupies 2 to 115; sequence QILLVEDDNT…VLIAKLQAIY (114 aa). Residue Asp-51 is modified to 4-aspartylphosphate. Residues 126–224 constitute a DNA-binding region (ompR/PhoB-type); it reads KRTLTWQDAV…KVGKGYMAHE (99 aa). Residues Thr-128, Thr-130, and Thr-149 each carry the phosphothreonine modification.

Interacts with GraX. In terms of processing, phosphorylated by GraS. Phosphorylated by Stk1; phosphorylation increases the DNA-binding activity of GraR.

The protein localises to the cytoplasm. In terms of biological role, member of the two-component regulatory system GraR/GraS involved in resistance against cationic antimicrobial peptides (CAMPs). Upon phosphorylation by GraS, functions as a transcription regulator by direct binding to promoter regions of target genes such as adhesins, exoproteins, transporters, toxins, and proteins involved in cell wall synthesis. Down-regulates the expression of many genes involved in RNA and amino acid synthesis or glycolysis. The polypeptide is Response regulator protein GraR (graR) (Staphylococcus aureus (strain USA300)).